We begin with the raw amino-acid sequence, 68 residues long: Medusin-AS (68 aa).

The N-terminal stretch at 1–22 (MAFLKKSLFLVLFLGLVSLSVC) is a signal peptide. A propeptide spanning residues 23 to 49 (EEEKRESEEEKNEQEEDDRDERSEEKR) is cleaved from the precursor. Residues 24-46 (EEKRESEEEKNEQEEDDRDERSE) are disordered. Positions 31 to 41 (EEKNEQEEDDR) are enriched in acidic residues. A Leucine amide modification is found at Leu67.

This sequence belongs to the frog skin active peptide (FSAP) family. Medusin subfamily. As to expression, expressed by the skin glands.

The protein resides in the secreted. Its function is as follows. Antimicrobial peptide active against Gram-positive bacteria and fungi but inactive against Gram-negative bacteria. Also inhibits growth of B.dendrobatidis zoospores at high concentrations. Shows anticancer activities. Shows hemolytic activity. This Agalychnis spurrelli (Gliding leaf frog) protein is Medusin-AS.